Consider the following 304-residue polypeptide: Acetyl-coenzyme A carboxylase carboxyl transferase subunit beta (304 aa).

A CoA carboxyltransferase N-terminal domain is found at 25-294 (VWTKCDSCGQ…PSVVESKADT (270 aa)). Positions 29, 32, 48, and 51 each coordinate Zn(2+). A C4-type zinc finger spans residues 29–51 (CDSCGQVLYRAELERNLEVCPKC).

It belongs to the AccD/PCCB family. As to quaternary structure, acetyl-CoA carboxylase is a heterohexamer composed of biotin carboxyl carrier protein (AccB), biotin carboxylase (AccC) and two subunits each of ACCase subunit alpha (AccA) and ACCase subunit beta (AccD). Zn(2+) is required as a cofactor.

It localises to the cytoplasm. The catalysed reaction is N(6)-carboxybiotinyl-L-lysyl-[protein] + acetyl-CoA = N(6)-biotinyl-L-lysyl-[protein] + malonyl-CoA. The protein operates within lipid metabolism; malonyl-CoA biosynthesis; malonyl-CoA from acetyl-CoA: step 1/1. Its function is as follows. Component of the acetyl coenzyme A carboxylase (ACC) complex. Biotin carboxylase (BC) catalyzes the carboxylation of biotin on its carrier protein (BCCP) and then the CO(2) group is transferred by the transcarboxylase to acetyl-CoA to form malonyl-CoA. This is Acetyl-coenzyme A carboxylase carboxyl transferase subunit beta from Yersinia pseudotuberculosis serotype O:1b (strain IP 31758).